Reading from the N-terminus, the 628-residue chain is Leucine-rich repeat and fibronectin type-III domain-containing protein 3 (628 aa).

The signal sequence occupies residues M1–A16. Residues S17–T540 lie on the Extracellular side of the membrane. The LRRNT domain occupies P19 to R59. LRR repeat units lie at residues R60–T83, G84–D105, A108–G129, N132–D153, T157–R178, N181–R202, and K205–S226. In terms of domain architecture, LRRCT spans N249 to P295. Residues P295 to T382 enclose the Ig-like domain. C317 and C366 are joined by a disulfide. N-linked (GlcNAc...) asparagine glycosylation is found at N348 and N393. A disordered region spans residues E380–V433. Residues P410 to P428 show a composition bias toward low complexity. The Fibronectin type-III domain occupies P427–A525. Residues M541 to L561 traverse the membrane as a helical segment. At M562–P628 the chain is on the cytoplasmic side. The disordered stretch occupies residues Q570–H609. A compositionally biased stretch (polar residues) spans P580–G590. A compositionally biased stretch (pro residues) spans M595–S604.

It belongs to the LRFN family. In terms of assembly, can form heteromeric complexes with LRFN1, LRFN2, LRFN4 and LRFN5. Able to form homomeric complexes across cell junctions, between adjacent cells. Does not interact with DLG4. In terms of processing, N-glycosylated.

It is found in the cell membrane. The protein resides in the cell projection. The protein localises to the axon. It localises to the dendrite. Its subcellular location is the synapse. It is found in the presynaptic cell membrane. The protein resides in the postsynaptic cell membrane. In terms of biological role, cell adhesion molecule that mediates homophilic cell-cell adhesion in a Ca(2+)-independent manner. Promotes neurite outgrowth in hippocampal neurons. The chain is Leucine-rich repeat and fibronectin type-III domain-containing protein 3 (LRFN3) from Bos taurus (Bovine).